Consider the following 211-residue polypeptide: Large ribosomal subunit protein uL3 (211 aa).

The tract at residues 122 to 157 (NQKRNNFGRGPMSHGSKNHRAPGSIGAGTTPGRVYP) is disordered.

This sequence belongs to the universal ribosomal protein uL3 family. As to quaternary structure, part of the 50S ribosomal subunit. Forms a cluster with proteins L14 and L19.

Its function is as follows. One of the primary rRNA binding proteins, it binds directly near the 3'-end of the 23S rRNA, where it nucleates assembly of the 50S subunit. The polypeptide is Large ribosomal subunit protein uL3 (Trichormus variabilis (strain ATCC 29413 / PCC 7937) (Anabaena variabilis)).